The chain runs to 429 residues: Adenylosuccinate synthetase (429 aa).

GTP is bound by residues 12–18 (GDEGKGK) and 40–42 (GHT). The active-site Proton acceptor is the aspartate 13. Residues aspartate 13 and glycine 40 each coordinate Mg(2+). Residues 13–16 (DEGK), 38–41 (NAGH), threonine 129, arginine 143, glutamine 223, threonine 238, and arginine 302 contribute to the IMP site. The Proton donor role is filled by histidine 41. 298 to 304 (VVTGRKR) serves as a coordination point for substrate. GTP is bound by residues arginine 304, 330–332 (KLD), and 412–414 (STS).

Belongs to the adenylosuccinate synthetase family. As to quaternary structure, homodimer. The cofactor is Mg(2+).

The protein resides in the cytoplasm. It catalyses the reaction IMP + L-aspartate + GTP = N(6)-(1,2-dicarboxyethyl)-AMP + GDP + phosphate + 2 H(+). It participates in purine metabolism; AMP biosynthesis via de novo pathway; AMP from IMP: step 1/2. In terms of biological role, plays an important role in the de novo pathway of purine nucleotide biosynthesis. Catalyzes the first committed step in the biosynthesis of AMP from IMP. The protein is Adenylosuccinate synthetase of Bartonella bacilliformis (strain ATCC 35685 / KC583 / Herrer 020/F12,63).